The chain runs to 179 residues: Inner membrane-spanning protein YciB (179 aa).

Transmembrane regions (helical) follow at residues 22–42, 50–70, 76–96, 121–141, and 149–169; these read IYAATSALIVATAIVLIYSWV, MALITFVLVAVFGGLTLFFHN, WKVTVIYALFAGALLISQWVM, LAWALFFIACGLANIYIAFWL, and FKVFGLTALTLIFTLLSGVYI.

This sequence belongs to the YciB family.

It localises to the cell inner membrane. Functionally, plays a role in cell envelope biogenesis, maintenance of cell envelope integrity and membrane homeostasis. This is Inner membrane-spanning protein YciB from Salmonella agona (strain SL483).